Here is an 87-residue protein sequence, read N- to C-terminus: Co-chaperonin GroES (87 aa).

Belongs to the GroES chaperonin family. Heptamer of 7 subunits arranged in a ring. Interacts with the chaperonin GroEL.

The protein resides in the cytoplasm. In terms of biological role, together with the chaperonin GroEL, plays an essential role in assisting protein folding. The GroEL-GroES system forms a nano-cage that allows encapsulation of the non-native substrate proteins and provides a physical environment optimized to promote and accelerate protein folding. GroES binds to the apical surface of the GroEL ring, thereby capping the opening of the GroEL channel. This is Co-chaperonin GroES from Campylobacter hominis (strain ATCC BAA-381 / DSM 21671 / CCUG 45161 / LMG 19568 / NCTC 13146 / CH001A).